The primary structure comprises 202 residues: NADH-quinone oxidoreductase subunit B 2 (202 aa).

Residues C38, C39, C104, and C133 each contribute to the [4Fe-4S] cluster site.

This sequence belongs to the complex I 20 kDa subunit family. As to quaternary structure, NDH-1 is composed of 14 different subunits. Subunits NuoB, C, D, E, F, and G constitute the peripheral sector of the complex. It depends on [4Fe-4S] cluster as a cofactor.

It localises to the cell inner membrane. It carries out the reaction a quinone + NADH + 5 H(+)(in) = a quinol + NAD(+) + 4 H(+)(out). In terms of biological role, NDH-1 shuttles electrons from NADH, via FMN and iron-sulfur (Fe-S) centers, to quinones in the respiratory chain. The immediate electron acceptor for the enzyme in this species is believed to be ubiquinone. Couples the redox reaction to proton translocation (for every two electrons transferred, four hydrogen ions are translocated across the cytoplasmic membrane), and thus conserves the redox energy in a proton gradient. This is NADH-quinone oxidoreductase subunit B 2 from Koribacter versatilis (strain Ellin345).